Here is a 193-residue protein sequence, read N- to C-terminus: Peptidyl-tRNA hydrolase (193 aa).

Tyrosine 17 provides a ligand contact to tRNA. Histidine 22 (proton acceptor) is an active-site residue. 3 residues coordinate tRNA: phenylalanine 68, asparagine 70, and asparagine 115.

The protein belongs to the PTH family. Monomer.

Its subcellular location is the cytoplasm. It carries out the reaction an N-acyl-L-alpha-aminoacyl-tRNA + H2O = an N-acyl-L-amino acid + a tRNA + H(+). Hydrolyzes ribosome-free peptidyl-tRNAs (with 1 or more amino acids incorporated), which drop off the ribosome during protein synthesis, or as a result of ribosome stalling. Its function is as follows. Catalyzes the release of premature peptidyl moieties from peptidyl-tRNA molecules trapped in stalled 50S ribosomal subunits, and thus maintains levels of free tRNAs and 50S ribosomes. This chain is Peptidyl-tRNA hydrolase, found in Alteromonas mediterranea (strain DSM 17117 / CIP 110805 / LMG 28347 / Deep ecotype).